A 493-amino-acid chain; its full sequence is ATP synthase subunit beta, chloroplastic (493 aa).

170–177 (GGAGVGKT) provides a ligand contact to ATP.

It belongs to the ATPase alpha/beta chains family. F-type ATPases have 2 components, CF(1) - the catalytic core - and CF(0) - the membrane proton channel. CF(1) has five subunits: alpha(3), beta(3), gamma(1), delta(1), epsilon(1). CF(0) has four main subunits: a(1), b(1), b'(1) and c(9-12).

Its subcellular location is the plastid. The protein localises to the chloroplast thylakoid membrane. It catalyses the reaction ATP + H2O + 4 H(+)(in) = ADP + phosphate + 5 H(+)(out). Its function is as follows. Produces ATP from ADP in the presence of a proton gradient across the membrane. The catalytic sites are hosted primarily by the beta subunits. The protein is ATP synthase subunit beta, chloroplastic of Chaetosphaeridium globosum (Charophycean green alga).